A 194-amino-acid chain; its full sequence is Probable proteasome subunit beta type-4 (194 aa).

The protein belongs to the peptidase T1B family. The 26S proteasome consists of a 20S proteasome core and two 19S regulatory subunits. The 20S proteasome core is composed of 28 subunits that are arranged in four stacked rings, resulting in a barrel-shaped structure. The two end rings are each formed by seven alpha subunits, and the two central rings are each formed by seven beta subunits. The catalytic chamber with the active sites is on the inside of the barrel.

It localises to the cytoplasm. The protein localises to the nucleus. Its function is as follows. Non-catalytic component of the proteasome, a multicatalytic proteinase complex which is characterized by its ability to cleave peptides with Arg, Phe, Tyr, Leu, and Glu adjacent to the leaving group at neutral or slightly basic pH. The proteasome has an ATP-dependent proteolytic activity. In Schizosaccharomyces pombe (strain 972 / ATCC 24843) (Fission yeast), this protein is Probable proteasome subunit beta type-4.